The chain runs to 485 residues: DNA polymerase subunit gamma-2 (485 aa).

A disordered region spans residues 28 to 67 (RQPEQLSKGTGSFVGPVRSQAELPRNEPREAPESGGEGSE).

Heterotrimer composed of a catalytic subunit and a homodimer of accessory subunits (POLG:POLG2).

It localises to the mitochondrion. It is found in the mitochondrion matrix. The protein localises to the mitochondrion nucleoid. In terms of biological role, accessory subunit of DNA polymerase gamma solely responsible for replication of mitochondrial DNA (mtDNA). Acts as an allosteric regulator of the holoenzyme activities. Enhances the polymerase activity and the processivity of POLG by increasing its interactions with the DNA template. Suppresses POLG exonucleolytic proofreading especially toward homopolymeric templates bearing mismatched termini. Binds to single-stranded DNA. The chain is DNA polymerase subunit gamma-2 (POLG2) from Bos taurus (Bovine).